A 343-amino-acid polypeptide reads, in one-letter code: Heat-inducible transcription repressor HrcA (343 aa).

This sequence belongs to the HrcA family.

In terms of biological role, negative regulator of class I heat shock genes (grpE-dnaK-dnaJ and groELS operons). Prevents heat-shock induction of these operons. The protein is Heat-inducible transcription repressor HrcA of Alkaliphilus metalliredigens (strain QYMF).